Consider the following 346-residue polypeptide: Cell division protein ZipA (346 aa).

The Periplasmic segment spans residues 1-6 (MEDLQL). Residues 7-27 (VLFVLGAIAIVAVLVHGFWSI) form a helical membrane-spanning segment. Topologically, residues 28-346 (RRQQPKSLKD…DYLHRIRANA (319 aa)) are cytoplasmic. Positions 116 to 146 (EPSMAQPDFSLQSPTAKEQHRGPKASRQEPV) are disordered.

Belongs to the ZipA family. In terms of assembly, interacts with FtsZ via their C-terminal domains.

Its subcellular location is the cell inner membrane. Functionally, essential cell division protein that stabilizes the FtsZ protofilaments by cross-linking them and that serves as a cytoplasmic membrane anchor for the Z ring. Also required for the recruitment to the septal ring of downstream cell division proteins. The sequence is that of Cell division protein ZipA from Shewanella sp. (strain ANA-3).